The primary structure comprises 334 residues: Ornithine carbamoyltransferase (334 aa).

Carbamoyl phosphate is bound by residues 56–59 (STRT), glutamine 83, arginine 107, and 134–137 (HPTQ). L-ornithine is bound by residues asparagine 168, aspartate 232, and 236–237 (SM). Carbamoyl phosphate is bound by residues 274–275 (CL) and arginine 320.

The protein belongs to the aspartate/ornithine carbamoyltransferase superfamily. OTCase family.

It localises to the cytoplasm. The enzyme catalyses carbamoyl phosphate + L-ornithine = L-citrulline + phosphate + H(+). The protein operates within amino-acid biosynthesis; L-arginine biosynthesis; L-arginine from L-ornithine and carbamoyl phosphate: step 1/3. Functionally, reversibly catalyzes the transfer of the carbamoyl group from carbamoyl phosphate (CP) to the N(epsilon) atom of ornithine (ORN) to produce L-citrulline. This Shigella boydii serotype 4 (strain Sb227) protein is Ornithine carbamoyltransferase.